A 767-amino-acid polypeptide reads, in one-letter code: ATP-dependent rRNA helicase SPB4 (767 aa).

Positions 28–56 (WTKLTPPLTPWVVSLLSDLGFGQMTPVQA) match the Q motif motif. The 233-residue stretch at 59 to 291 (IPLFVSHKDV…RIGLRNPVRV (233 aa)) folds into the Helicase ATP-binding domain. Residue 72–79 (AVTGSGKT) coordinates ATP. The tract at residues 132–176 (HVQAQQQQDQDEQDEQDEQEAQSDSDTDPDASTALNNKRKSSNHL) is disordered. The segment covering 140–160 (DQDEQDEQDEQEAQSDSDTDP) has biased composition (acidic residues). Positions 239 to 242 (DEAD) match the DEAD box motif. Residues 330–507 (QLARIVLFES…ILEPAEDDAS (178 aa)) enclose the Helicase C-terminal domain. Residues 609-767 (KLSGDQAKPP…NADAEPFFVI (159 aa)) are disordered. Basic and acidic residues-rich tracts occupy residues 636-645 (CDSHDSDDAH) and 659-681 (LERE…ANRE). The stretch at 654–746 (KNKRKLEREK…RANSDNDDAM (93 aa)) forms a coiled coil. Residues 690 to 700 (LKTQAAESSSN) are compositionally biased toward polar residues. Basic and acidic residues predominate over residues 701 to 746 (AKHEPPQDDHDEHDWNDDYRKLQKDKRQQRQRNKADRANSDNDDAM). The segment covering 749 to 761 (NSDSDAAAANADA) has biased composition (low complexity).

It belongs to the DEAD box helicase family. DDX55/SPB4 subfamily. In terms of assembly, component of pre-60S ribosomal complexes.

It is found in the nucleus. The protein resides in the nucleolus. The catalysed reaction is ATP + H2O = ADP + phosphate + H(+). In terms of biological role, ATP-binding RNA helicase involved in the biogenesis of 60S ribosomal subunits. Binds 90S pre-ribosomal particles and dissociates from pre-60S ribosomal particles after processing of 27SB pre-rRNA. Required for the normal formation of 18S rRNA through the processing of pre-rRNAs at sites A0, A1 and A2, and the normal formation of 25S and 5.8S rRNAs through the processing of pre-rRNAs at sites C1 and C2. This Mycosarcoma maydis (Corn smut fungus) protein is ATP-dependent rRNA helicase SPB4.